A 196-amino-acid chain; its full sequence is Probable GTP-binding protein EngB (196 aa).

The 174-residue stretch at 22–195 (NIPEIALVGR…WQWIEERMGK (174 aa)) folds into the EngB-type G domain. GTP is bound by residues 30-37 (GRSNVGKS), 57-61 (GKTQT), 75-78 (DVPG), 142-145 (TKID), and 174-176 (FSA). Mg(2+) contacts are provided by S37 and T59.

This sequence belongs to the TRAFAC class TrmE-Era-EngA-EngB-Septin-like GTPase superfamily. EngB GTPase family. The cofactor is Mg(2+).

Its function is as follows. Necessary for normal cell division and for the maintenance of normal septation. The polypeptide is Probable GTP-binding protein EngB (Limosilactobacillus reuteri (strain DSM 20016) (Lactobacillus reuteri)).